We begin with the raw amino-acid sequence, 438 residues long: Dihydroorotase (438 aa).

Positions 58 and 60 each coordinate Zn(2+). Residues 60-62 and Asn-92 contribute to the substrate site; that span reads HLR. Zn(2+) is bound by residues Asp-152, His-179, and His-232. Asn-278 provides a ligand contact to substrate. Asp-305 serves as a coordination point for Zn(2+). Asp-305 is a catalytic residue. Substrate contacts are provided by residues His-309 and 323-324; that span reads FG.

Belongs to the metallo-dependent hydrolases superfamily. DHOase family. Class I DHOase subfamily. It depends on Zn(2+) as a cofactor.

It carries out the reaction (S)-dihydroorotate + H2O = N-carbamoyl-L-aspartate + H(+). The protein operates within pyrimidine metabolism; UMP biosynthesis via de novo pathway; (S)-dihydroorotate from bicarbonate: step 3/3. Its function is as follows. Catalyzes the reversible cyclization of carbamoyl aspartate to dihydroorotate. This chain is Dihydroorotase, found in Leifsonia xyli subsp. xyli (strain CTCB07).